We begin with the raw amino-acid sequence, 475 residues long: ATP synthase subunit beta (475 aa).

148–155 (GGAGVGKT) provides a ligand contact to ATP.

Belongs to the ATPase alpha/beta chains family. As to quaternary structure, F-type ATPases have 2 components, CF(1) - the catalytic core - and CF(0) - the membrane proton channel. CF(1) has five subunits: alpha(3), beta(3), gamma(1), delta(1), epsilon(1). CF(0) has three main subunits: a(1), b(2) and c(9-12). The alpha and beta chains form an alternating ring which encloses part of the gamma chain. CF(1) is attached to CF(0) by a central stalk formed by the gamma and epsilon chains, while a peripheral stalk is formed by the delta and b chains.

It localises to the cell inner membrane. The catalysed reaction is ATP + H2O + 4 H(+)(in) = ADP + phosphate + 5 H(+)(out). In terms of biological role, produces ATP from ADP in the presence of a proton gradient across the membrane. The catalytic sites are hosted primarily by the beta subunits. The polypeptide is ATP synthase subunit beta (Psychrobacter sp. (strain PRwf-1)).